The following is a 156-amino-acid chain: Small ribosomal subunit protein uS7 (156 aa).

The protein belongs to the universal ribosomal protein uS7 family. Part of the 30S ribosomal subunit. Contacts proteins S9 and S11.

Its function is as follows. One of the primary rRNA binding proteins, it binds directly to 16S rRNA where it nucleates assembly of the head domain of the 30S subunit. Is located at the subunit interface close to the decoding center, probably blocks exit of the E-site tRNA. The sequence is that of Small ribosomal subunit protein uS7 from Rhizobium etli (strain ATCC 51251 / DSM 11541 / JCM 21823 / NBRC 15573 / CFN 42).